We begin with the raw amino-acid sequence, 179 residues long: Hypoxanthine-guanine phosphoribosyltransferase (179 aa).

The diphosphate site is built by lysine 42 and glycine 43. Residues glutamate 98 and aspartate 99 each contribute to the Mg(2+) site. The active-site Proton acceptor is glutamate 102. Residues lysine 130, 151 to 152 (FV), and aspartate 158 each bind GMP. Arginine 164 contacts diphosphate.

It belongs to the purine/pyrimidine phosphoribosyltransferase family. Requires Mg(2+) as cofactor.

The protein localises to the cytoplasm. It carries out the reaction IMP + diphosphate = hypoxanthine + 5-phospho-alpha-D-ribose 1-diphosphate. The enzyme catalyses GMP + diphosphate = guanine + 5-phospho-alpha-D-ribose 1-diphosphate. The protein operates within purine metabolism; IMP biosynthesis via salvage pathway; IMP from hypoxanthine: step 1/1. It participates in purine metabolism; GMP biosynthesis via salvage pathway; GMP from guanine: step 1/1. In terms of biological role, purine salvage pathway enzyme that catalyzes the transfer of the ribosyl-5-phosphate group from 5-phospho-alpha-D-ribose 1-diphosphate (PRPP) to the N9 position of the 6-oxopurines hypoxanthine and guanine to form the corresponding ribonucleotides IMP (inosine 5'-monophosphate) and GMP (guanosine 5'-monophosphate), with the release of PPi. In Staphylococcus aureus (strain COL), this protein is Hypoxanthine-guanine phosphoribosyltransferase (hpt).